The following is a 464-amino-acid chain: Siroheme synthase (464 aa).

Residues 1–203 form a precorrin-2 dehydrogenase /sirohydrochlorin ferrochelatase region; sequence MEFLPLFHNL…GQGAEAERLL (203 aa). NAD(+) is bound by residues 22–23 and 43–44; these read EI and PE. Position 128 is a phosphoserine (S128). The tract at residues 216 to 464 is uroporphyrinogen-III C-methyltransferase; that stretch reads GEVYLVGAGP…AWFEGAQATV (249 aa). Position 225 (P225) interacts with S-adenosyl-L-methionine. The Proton acceptor role is filled by D248. Residue K270 is the Proton donor of the active site. Residues 301 to 303, I306, 331 to 332, M383, and G412 contribute to the S-adenosyl-L-methionine site; these read GGD and TA.

It in the N-terminal section; belongs to the precorrin-2 dehydrogenase / sirohydrochlorin ferrochelatase family. The protein in the C-terminal section; belongs to the precorrin methyltransferase family.

It carries out the reaction uroporphyrinogen III + 2 S-adenosyl-L-methionine = precorrin-2 + 2 S-adenosyl-L-homocysteine + H(+). The enzyme catalyses precorrin-2 + NAD(+) = sirohydrochlorin + NADH + 2 H(+). It catalyses the reaction siroheme + 2 H(+) = sirohydrochlorin + Fe(2+). It participates in cofactor biosynthesis; adenosylcobalamin biosynthesis; precorrin-2 from uroporphyrinogen III: step 1/1. It functions in the pathway cofactor biosynthesis; adenosylcobalamin biosynthesis; sirohydrochlorin from precorrin-2: step 1/1. The protein operates within porphyrin-containing compound metabolism; siroheme biosynthesis; precorrin-2 from uroporphyrinogen III: step 1/1. Its pathway is porphyrin-containing compound metabolism; siroheme biosynthesis; siroheme from sirohydrochlorin: step 1/1. It participates in porphyrin-containing compound metabolism; siroheme biosynthesis; sirohydrochlorin from precorrin-2: step 1/1. Its function is as follows. Multifunctional enzyme that catalyzes the SAM-dependent methylations of uroporphyrinogen III at position C-2 and C-7 to form precorrin-2 via precorrin-1. Then it catalyzes the NAD-dependent ring dehydrogenation of precorrin-2 to yield sirohydrochlorin. Finally, it catalyzes the ferrochelation of sirohydrochlorin to yield siroheme. The sequence is that of Siroheme synthase from Pseudomonas savastanoi pv. phaseolicola (strain 1448A / Race 6) (Pseudomonas syringae pv. phaseolicola (strain 1448A / Race 6)).